A 294-amino-acid polypeptide reads, in one-letter code: 4-hydroxy-tetrahydrodipicolinate synthase (294 aa).

T47 is a binding site for pyruvate. Catalysis depends on Y136, which acts as the Proton donor/acceptor. K164 (schiff-base intermediate with substrate) is an active-site residue. V206 contributes to the pyruvate binding site.

This sequence belongs to the DapA family. As to quaternary structure, homotetramer; dimer of dimers.

Its subcellular location is the cytoplasm. It catalyses the reaction L-aspartate 4-semialdehyde + pyruvate = (2S,4S)-4-hydroxy-2,3,4,5-tetrahydrodipicolinate + H2O + H(+). It functions in the pathway amino-acid biosynthesis; L-lysine biosynthesis via DAP pathway; (S)-tetrahydrodipicolinate from L-aspartate: step 3/4. Catalyzes the condensation of (S)-aspartate-beta-semialdehyde [(S)-ASA] and pyruvate to 4-hydroxy-tetrahydrodipicolinate (HTPA). This is 4-hydroxy-tetrahydrodipicolinate synthase from Cyanothece sp. (strain PCC 7425 / ATCC 29141).